Reading from the N-terminus, the 313-residue chain is Olfactory receptor 1J2 (313 aa).

Topologically, residues 1–25 (MSPENQSSVSEFLLLGLPIRPEQQA) are extracellular. Residue N5 is glycosylated (N-linked (GlcNAc...) asparagine). A helical membrane pass occupies residues 26–49 (VFFTLFLGMYLTTVLGNLLIMLLI). Over 50–57 (QLDSHLHT) the chain is Cytoplasmic. Residues 58 to 79 (PMYFFLSHLALTDISFSSVTVP) form a helical membrane-spanning segment. Over 80–100 (KMLMDMRTKYKSILYEECISQ) the chain is Extracellular. A disulfide bridge connects residues C97 and C189. The helical transmembrane segment at 101-120 (MYFFIFFTDLDSFLITSMAY) threads the bilayer. At 121–139 (DRYVAICHPLHYTVIMREE) the chain is on the cytoplasmic side. A helical transmembrane segment spans residues 140 to 158 (LCVFLVAVSWILSCASSLS). Topologically, residues 159-196 (HTLLLTRLSFCAANTIPHVFCDLAALLKLSCSDIFLNE) are extracellular. Residues 197–219 (LVMFTVGVVVITLPFMCILVSYG) traverse the membrane as a helical segment. Residues 220–236 (YIGATILRVPSTKGIHK) lie on the Cytoplasmic side of the membrane. A helical transmembrane segment spans residues 237 to 259 (ALSTCGSHLSVVSLYYGSIFGQY). Over 260-272 (LFPTVSSSIDKDV) the chain is Extracellular. The helical transmembrane segment at 273–292 (IVALMYTVVTPMLNPFIYSL) threads the bilayer. The Cytoplasmic portion of the chain corresponds to 293 to 313 (RNRDMKEALGKLFSRATFFSW).

The protein belongs to the G-protein coupled receptor 1 family.

It is found in the cell membrane. Odorant receptor. The sequence is that of Olfactory receptor 1J2 (OR1J2) from Homo sapiens (Human).